The sequence spans 316 residues: Beta-ketoacyl-[acyl-carrier-protein] synthase III (316 aa).

Catalysis depends on residues Cys-112 and His-243. The tract at residues 244 to 248 (QANIR) is ACP-binding. Asn-273 is an active-site residue.

The protein belongs to the thiolase-like superfamily. FabH family. Homodimer.

The protein localises to the cytoplasm. The catalysed reaction is malonyl-[ACP] + acetyl-CoA + H(+) = 3-oxobutanoyl-[ACP] + CO2 + CoA. The protein operates within lipid metabolism; fatty acid biosynthesis. Functionally, catalyzes the condensation reaction of fatty acid synthesis by the addition to an acyl acceptor of two carbons from malonyl-ACP. Catalyzes the first condensation reaction which initiates fatty acid synthesis and may therefore play a role in governing the total rate of fatty acid production. Possesses both acetoacetyl-ACP synthase and acetyl transacylase activities. Its substrate specificity determines the biosynthesis of branched-chain and/or straight-chain of fatty acids. The chain is Beta-ketoacyl-[acyl-carrier-protein] synthase III from Actinobacillus pleuropneumoniae serotype 5b (strain L20).